Reading from the N-terminus, the 129-residue chain is Small ribosomal subunit protein uS11 (129 aa).

It belongs to the universal ribosomal protein uS11 family. Part of the 30S ribosomal subunit. Interacts with proteins S7 and S18. Binds to IF-3.

In terms of biological role, located on the platform of the 30S subunit, it bridges several disparate RNA helices of the 16S rRNA. Forms part of the Shine-Dalgarno cleft in the 70S ribosome. The polypeptide is Small ribosomal subunit protein uS11 (Bartonella bacilliformis (strain ATCC 35685 / KC583 / Herrer 020/F12,63)).